The primary structure comprises 1992 residues: Fer-1-like protein 4 (1992 aa).

C2 domains lie at 1 to 97 (MALT…VLRE), 214 to 330 (PRGD…QKWA), and 369 to 502 (TSSD…AGFN). Topologically, residues 1-1952 (MALTVCVRHL…PLKTFIFFIW (1952 aa)) are extracellular. 3 disordered regions span residues 554-606 (RVEP…APEI), 661-686 (AGRQ…LEVQ), and 691-710 (SEDR…PAQW). Residues 559–569 (PSQTTQRSGLS) show a composition bias toward polar residues. Basic residues predominate over residues 572–581 (TGKKKKKKEK). 2 consecutive C2 domains span residues 951–1078 (PSSG…ELQF) and 1126–1250 (ISGH…PQEE). 2 disordered regions span residues 1245–1276 (EDPQ…EAGT) and 1322–1361 (FQGQ…SKVS). Acidic residues-rich tracts occupy residues 1247-1257 (PQEEEETEEET) and 1328-1337 (SDDEMDEAGD). 2 C2 domains span residues 1430-1549 (SFSE…ANCG) and 1675-1824 (VPAP…EHCS). Ca(2+) contacts are provided by D1464, D1470, D1519, D1521, D1527, D1795, S1798, and D1801. The interval 1862–1885 (EAREAQAGKKRKRKRRAGRPEDLE) is disordered. Over residues 1869–1878 (GKKRKRKRRA) the composition is skewed to basic residues. A helical membrane pass occupies residues 1953 to 1973 (RRYWRILVLLLLALITIFLLL). Residues 1974-1992 (VFYTIPGQISEVIFSPVHK) lie on the Cytoplasmic side of the membrane.

The cofactor is Ca(2+).

It is found in the membrane. The chain is Fer-1-like protein 4 (Fer1l4) from Mus musculus (Mouse).